Consider the following 807-residue polypeptide: Glycerol-3-phosphate acyltransferase (807 aa).

Positions 308-313 (CHRSHM) match the HXXXXD motif motif.

The protein belongs to the GPAT/DAPAT family.

The protein resides in the cell inner membrane. The catalysed reaction is sn-glycerol 3-phosphate + an acyl-CoA = a 1-acyl-sn-glycero-3-phosphate + CoA. It participates in phospholipid metabolism; CDP-diacylglycerol biosynthesis; CDP-diacylglycerol from sn-glycerol 3-phosphate: step 1/3. The protein is Glycerol-3-phosphate acyltransferase of Shewanella sp. (strain ANA-3).